The primary structure comprises 499 residues: Kynurenine 3-monooxygenase 3 (499 aa).

Belongs to the aromatic-ring hydroxylase family. KMO subfamily. FAD serves as cofactor.

The protein resides in the mitochondrion outer membrane. The enzyme catalyses L-kynurenine + NADPH + O2 + H(+) = 3-hydroxy-L-kynurenine + NADP(+) + H2O. It functions in the pathway cofactor biosynthesis; NAD(+) biosynthesis; quinolinate from L-kynurenine: step 1/3. Catalyzes the hydroxylation of L-kynurenine (L-Kyn) to form 3-hydroxy-L-kynurenine (L-3OHKyn). Required for synthesis of quinolinic acid. The polypeptide is Kynurenine 3-monooxygenase 3 (bna4-3) (Aspergillus niger (strain ATCC MYA-4892 / CBS 513.88 / FGSC A1513)).